Consider the following 355-residue polypeptide: DNA-directed RNA polymerase subunit alpha (355 aa).

Residues 1-233 (MVREKVRVST…DLFIPFLHKE (233 aa)) are alpha N-terminal domain (alpha-NTD). The tract at residues 268-355 (KKKIALKSIF…EIYCYSIFFH (88 aa)) is alpha C-terminal domain (alpha-CTD).

Belongs to the RNA polymerase alpha chain family. In plastids the minimal PEP RNA polymerase catalytic core is composed of four subunits: alpha, beta, beta', and beta''. When a (nuclear-encoded) sigma factor is associated with the core the holoenzyme is formed, which can initiate transcription.

It localises to the plastid. The protein localises to the chloroplast. It catalyses the reaction RNA(n) + a ribonucleoside 5'-triphosphate = RNA(n+1) + diphosphate. DNA-dependent RNA polymerase catalyzes the transcription of DNA into RNA using the four ribonucleoside triphosphates as substrates. The chain is DNA-directed RNA polymerase subunit alpha from Jasminum nudiflorum (Winter jasmine).